Here is a 206-residue protein sequence, read N- to C-terminus: Cytochrome b-245 chaperone 1 homolog (206 aa).

A helical transmembrane segment spans residues 21–43; sequence GIRSWSILVGIASVGLAAAYYSS. The tract at residues 172 to 206 is disordered; it reads ADDDYPDDDDGIEDLGLGDSSDSQDDPDGDDDEEH. Acidic residues-rich tracts occupy residues 174 to 184 and 193 to 206; these read DDYPDDDDGIE and DSQD…DEEH.

The protein belongs to the CYBC1 family.

The protein resides in the endoplasmic reticulum membrane. Functions as a chaperone necessary for a stable expression of the CYBA and CYBB subunits of the cytochrome b-245 heterodimer. The chain is Cytochrome b-245 chaperone 1 homolog from Danio rerio (Zebrafish).